We begin with the raw amino-acid sequence, 370 residues long: MNTFSLQTRLYSGQGSLAVLKRFTNKHIWIICDGFLAHSPLLDTLRNALPADNRISVFSEITPDPTIHTVVQGIAQMQALQPQVVIGFGGGSAMDAAKAIVWFSQQSGINIETCVAIPTTSGTGSEVTSACVISDPDKGIKYPLFNNALYPDMAILDPELVVSVPPQITANTGMDVLTHALEAWVSPRASDFTDALAEKAAKLVFQYLPTAVEKGDCVATRGKMHNASTLAGMAFSQAGLGLNHAIAHQLGGQFHLPHGLANALLLTTVIRFNAGVPRAAKRYARLAKACGFCPAEANDIAAINALIQQIELLKQRCVLPSLAVALKEGRSDFSARIPAMVQAALADVTLRTNPRPANAEAIRELLEELL.

This sequence belongs to the iron-containing alcohol dehydrogenase family. In terms of assembly, interacts with PduP, probably via the N-terminus of PduQ. Fe cation serves as cofactor.

It is found in the bacterial microcompartment. It carries out the reaction 1-propanol + NAD(+) = propanal + NADH + H(+). Its pathway is polyol metabolism; 1,2-propanediol degradation. Its activity is regulated as follows. Enzyme is oxygen sensitive. In terms of biological role, an iron-dependent alcohol dehydrogenase required for optimal 1,2-propanediol (1,2-PD) degradation. NAD(+) and NADH are regenerated internally within the bacterial microcompartment (BMC) dedicated to 1,2-PD degradation by the PduP and PduQ enzymes, which reduce NAD(+) and oxidize NADH respectively, although there must also be cofactor transport across the BMC. The 1,2-PD-specific bacterial microcompartment (BMC) concentrates low levels of 1,2-PD catabolic enzymes, concentrates volatile reaction intermediates thus enhancing pathway flux and keeps the level of toxic, mutagenic propionaldehyde low. In Salmonella typhimurium (strain LT2 / SGSC1412 / ATCC 700720), this protein is 1-propanol dehydrogenase PduQ.